The sequence spans 806 residues: Exonuclease 1 (806 aa).

The tract at residues 1–99 (MGIQGLLQFI…KSRRERRQAN (99 aa)) is N-domain. Mg(2+) is bound by residues Asp30, Asp78, Glu150, Asp152, Asp171, Asp173, and Asp225. Residues 138–229 (RTRGVDCVVA…ILSGCDYLQS (92 aa)) form an I-domain region. Disordered stretches follow at residues 337-426 (RIDD…EDTS), 443-475 (HCPETQPTTKPLTNDNKVSKENHCGSTSGPFRP), and 512-754 (ETQE…SPGL). The segment covering 355 to 378 (RSSSWNDRCDKTATTQASIWSQNY) has biased composition (polar residues). Positions 412–425 (PQRESQVKRPREDT) are enriched in basic and acidic residues. 3 stretches are compositionally biased toward polar residues: residues 447-458 (TQPTTKPLTNDN), 533-542 (SQSGGDTSSL), and 578-589 (WSGTTKELNKSV). The span at 592-601 (PARDSTERQR) shows a compositional bias: basic and acidic residues. The segment covering 602–615 (SSSTPSGLSTLQQF) has biased composition (polar residues). The span at 651 to 670 (SQDSAYFSQSSSISASVENS) shows a compositional bias: low complexity. The span at 676 to 685 (NSDKEKERDS) shows a compositional bias: basic and acidic residues. Residues 686 to 696 (VVSNSPSSSPL) show a composition bias toward low complexity. The span at 744–754 (KNVNNENSPGL) shows a compositional bias: polar residues.

It belongs to the XPG/RAD2 endonuclease family. EXO1 subfamily. Mg(2+) serves as cofactor.

The protein resides in the nucleus. In terms of biological role, 5'-&gt;3' double-stranded DNA exonuclease which may also contain a cryptic 3'-&gt;5' double-stranded DNA exonuclease activity. Also exhibits endonuclease activity against 5'-overhanging flap structures similar to those generated by displacement synthesis when DNA polymerase encounters the 5'-end of a downstream Okazaki fragment. Required for DNA mismatch repair (MMR). In Danio rerio (Zebrafish), this protein is Exonuclease 1 (exo1).